Here is a 457-residue protein sequence, read N- to C-terminus: Cell division protein FtsA (457 aa).

This sequence belongs to the FtsA/MreB family. Self-interacts. Interacts with FtsZ.

The protein localises to the cell membrane. Its function is as follows. Cell division protein that is involved in the assembly of the Z ring. May serve as a membrane anchor for the Z ring. Increased expression restores growth to a PBP2b (penA) deletion strain as well as mreCD and rodA deletions, but not gpsB or rodZ deletions. Does not restore wild-type cell morphology to the penA deletion. The chain is Cell division protein FtsA from Streptococcus pneumoniae serotype 2 (strain D39 / NCTC 7466).